Here is a 101-residue protein sequence, read N- to C-terminus: Large ribosomal subunit protein eL43 (101 aa).

A C4-type zinc finger spans residues 40–62; that stretch reads CPSCRSLVRLQRIAFGIWKCPKC.

This sequence belongs to the eukaryotic ribosomal protein eL43 family. It depends on Zn(2+) as a cofactor.

In Pyrobaculum neutrophilum (strain DSM 2338 / JCM 9278 / NBRC 100436 / V24Sta) (Thermoproteus neutrophilus), this protein is Large ribosomal subunit protein eL43.